Here is a 377-residue protein sequence, read N- to C-terminus: Membrane protein MLC1 (377 aa).

The segment covering 1–23 (MTQEPFREELAYDRMPTLERGRQ) has biased composition (basic and acidic residues). Residues 1 to 36 (MTQEPFREELAYDRMPTLERGRQDPASYAPDAKPSD) are disordered. 4 helical membrane-spanning segments follow: residues 52–72 (WVFS…SLYL), 82–100 (YLRC…SFTV), 111–131 (FQIL…WFGC), and 144–164 (FNLI…IIAA). S177 and S179 each carry phosphoserine. The next 4 membrane-spanning stretches (helical) occupy residues 199–219 (SVVE…ALNV), 230–250 (VTFF…HVAA), 257–277 (LVEV…TASG), and 304–324 (LLLL…GTAI).

In terms of assembly, interacts with ATP1B1. Part of a complex containing ATP1B1, TRPV4, AQP4 and HEPACAM. Expressed in the brain, with highest levels found in the amygdala, nucleus caudatus, thalamus and hippocampus.

The protein resides in the membrane. The protein localises to the cell membrane. It localises to the cytoplasm. It is found in the perinuclear region. Its subcellular location is the endoplasmic reticulum. In terms of biological role, transmembrane protein mainly expressed in brain astrocytes that may play a role in transport across the blood-brain and brain-cerebrospinal fluid barriers. Regulates the response of astrocytes to hypo-osmosis by promoting calcium influx. May function as regulatory protein of membrane protein complexes such as ion channels. In Homo sapiens (Human), this protein is Membrane protein MLC1.